The chain runs to 925 residues: Antiviral innate immune response receptor RIG-I (925 aa).

CARD domains follow at residues 1 to 87 and 92 to 172; these read MTTE…GLYE and WDFK…KTLK. Ser-8 is modified ((Microbial infection) Phosphoserine). Residue Ser-8 is modified to Phosphoserine. Glycyl lysine isopeptide (Lys-Gly) (interchain with G-Cter in ubiquitin) cross-links involve residues Lys-48, Lys-96, Lys-154, and Lys-164. Thr-170 carries the post-translational modification Phosphothreonine. Residues Lys-172, Lys-181, Lys-193, and Lys-203 each participate in a glycyl lysine isopeptide (Lys-Gly) (interchain with G-Cter in ubiquitin) cross-link. The interval 218–925 is interaction with ZC3HAV1; the sequence is ECQNLSENSC…IPFDPAEMSK (708 aa). Residues 251-430 enclose the Helicase ATP-binding domain; that stretch reads ALPAMKGKNT…DEALDYICKL (180 aa). Residue 264–271 coordinates ATP; that stretch reads APTGCGKT. Positions 372–375 match the DECH box motif; that stretch reads DECH. Asn-495 and Asn-549 each carry (Microbial infection) Deamidated asparagine; by herpes simplex virus 1/HHV-1 UL37. The Helicase C-terminal domain occupies 610–776; that stretch reads KLEDLCFILQ…RLQTWDEAVF (167 aa). A mediates interaction with RNF135 region spans residues 735–925; the sequence is GSKCFLLTSN…IPFDPAEMSK (191 aa). Thr-770 is modified (phosphothreonine; by CK2). The 132-residue stretch at 794-925 folds into the RLR CTR domain; the sequence is QEKPKPVPDK…IPFDPAEMSK (132 aa). Cys-810 contacts Zn(2+). Residue Lys-812 forms a Glycyl lysine isopeptide (Lys-Gly) (interchain with G-Cter in ubiquitin) linkage. Position 813 (Cys-813) interacts with Zn(2+). 2 positions are modified to phosphoserine; by CK2: Ser-854 and Ser-855. An N6-acetyllysine modification is found at Lys-858. Residues Cys-864 and Cys-869 each coordinate Zn(2+). An N6-acetyllysine modification is found at Lys-909.

Belongs to the helicase family. RLR subfamily. Monomer; maintained as a monomer in an autoinhibited state. Upon binding of viral RNAs and conformational shift, homooligomerizes and forms filaments on these molecules. Interacts (via tandem CARD domain) with MAVS/IPS1 promoting its filamentation. Interacts with DHX58/LGP2, IKBKE, TBK1 and STING1. Interacts (via CARD domain) with TRIM25 (via SPRY domain). Interacts (double-stranded RNA-bound oligomeric form) with RNF135 (homodimer); involved in RNA length-dependent activation of the RIG-I signaling pathway. Interacts with CYLD. Interacts with NLRC5; blocks the interaction of MAVS/IPS1 to RIGI. Interacts with SRC. Interacts with DDX60. Interacts with isoform 2 of ZC3HAV1 (via zinc-fingers) in an RNA-dependent manner. Interacts (via tandem CARD domain) with SEC14L1; the interaction is direct and impairs the interaction of RIGI with MAVS/IPS1. Interacts with VCP/p97; interaction is direct and allows the recruitment of RNF125 and subsequent ubiquitination and degradation. Interacts with NOP53; may regulate RIGI through USP15-mediated 'Lys-63'-linked deubiquitination. Interacts with SIGLEC10, CBL and PTPN11; within a negative feedback loop leading to RIGI degradation. Interacts with LRRC25. Interacts with ZCCHC3; leading to activation of RIGI. Interacts with RNF123. Interacts with UBE2D3 and UBE2N; E2 ubiquitin ligases involved in RNF135-mediated ubiquitination of RIGI and activation of the RIG-I signaling pathway. Interacts with IFIT3. Interacts with DDX3X. Interacts with RTN3. Interacts with ARL16; this interaction is GTP-dependent and induced upon viral infection; this interaction suppresses the RNA sensing activity of RIGI. Interacts with DHX16; this interaction enhances RIGI-mediated antiviral response. Interacts with IRGM; promoting RIGI degradation. Interacts with IFI6; this interaction inhibits RIGI activation. Interacts with ECSIT; this interaction bridges RIGI to the MAVS complex at the mitochondrion. Interacts with YWHAE; this interaction drives RIGI at the mitochondrion. In terms of assembly, (Microbial infection) Interacts with protein Z of Guanarito virus, Machupo virus, Junin arenavirus and Sabia virus. This interaction disrupts its interaction with MAVS/IPS1, impeding downstream IRF3 and NF-kappa-B activation and resulting in decreased IFN-beta induction. As to quaternary structure, (Microbial infection) Interacts (via CARD domain) with Human respiratory syncytial virus A non-structural protein 2 (NS2) and this interaction disrupts its interaction with MAVS/IPS1, impeding downstream IRF3 activation. (Microbial infection) Interacts with Rotavirus A non-structural protein 1 (NSP1) and this interaction induces down-regulation of RIGI. In terms of assembly, (Microbial infection) Interacts with paramyxoviruses (Sendai virus, Nipah virus, Measles virus and Parainfluenza virus 5) protein V; this interaction inhibits TRIM25-mediated ubiquitination of RIG-I and prevents downstream RIG-I signaling thereby inhibiting the IFN responses. As to quaternary structure, (Microbial infection) Interacts with herpes simplex virus 1 protein US11; this interaction prevents the interaction of MAVS/IPS1 to RIGI. (Microbial infection) Interacts with herpes simplex virus 1 protein UL37; this interaction deaminates RIGI and inhibits its activation. In terms of assembly, (Microbial infection) Interacts with Severe fever with thrombocytopenia virus (SFTSV) NSs; this interaction this interaction sequesters RIGI in NSs-induced cytoplasmic inclusion bodies thereby inhibiting the IFN responses. Phosphorylated in resting cells and dephosphorylated in RNA virus-infected cells. Phosphorylation at Thr-770, Ser-854 and Ser-855 results in inhibition of its activity while dephosphorylation at these sites results in its activation. Post-translationally, ubiquitinated. 'Lys-63' ubiquitination by RNF135, which occurs after RNA-binding and homodimerization, releases the autoinhibition of the CARD domains by the RLR CTR domain, an essential step in the activation of the RIG-I signaling pathway. Lys-172 is the critical site of ubiquitination for MAVS/IPS1 binding and to induce anti-viral signal transduction. Lys-154, Lys-164 and Lys-172 are shared sites for RNF135-mediated and TRIM4-mediated ubiquitination. Also undergoes 'Lys-48' ubiquitination at Lys-181 by RNF125 that leads to proteasomal degradation. 'Lys-48' ubiquitination follows viral infection and is enhanced by 'Lys-63'-linked ubiquitination of the CARD domains that promotes interaction with VCP/p97 and subsequent recruitment of RNF125. Within a negative feedback loop involving SIGLEC10 and PTPN11, 'Lys-48' ubiquitination at Lys-812 by CBL also elicits the proteasomal degradation of RIGI. Deubiquitinated by CYLD, a protease that selectively cleaves 'Lys-63'-linked ubiquitin chains. Also probably deubiquitinated by USP17L2/USP17 that cleaves 'Lys-48'- and 'Lys-63'-linked ubiquitin chains and positively regulates the receptor. Ubiquitinated by TRIM40 via 'Lys-48'-linked ubiquitination; leading to proteasomal degradation. Deubiquitinated by USP27X that cleaves 'Lys-63'-linked ubiquitin chains and inhibits the innate immune receptor activity. Deubiquitinated by USP3 that also cleaves 'Lys-63'-linked ubiquitin chains and inhibits the innate immune receptor activity. Undergoes 'Lys-48'-linked ubiquitination catalyzed by MARCHF5 at Lys-193 and Lys-203, leading to proteasomal degradation. In terms of processing, phosphorylated at Ser-8 and Thr-170; these phosphorylations suppresse the TRIM25-mediated 'Lys-63'-linked ubiquitination of RIG-I and thereby prevents RIG-I downstream signaling. Dephosphorylated by phosphatases PPP1CA/PPP1CC; this step is essential to activate RIGI and initiate downstream signaling. ISGylated. Conjugated to ubiquitin-like protein ISG15 upon IFN-beta stimulation. ISGylation negatively regulates its function in antiviral signaling response. Post-translationally, sumoylated, probably by MUL1; inhibiting its polyubiquitination. In terms of processing, acetylated in response to RNA virus infection. Deacetylated by HDAC6 in the presence of viral mRNAs which is required for detection of viral RNA by RIGI. (Microbial infection) Deamidated on Asn-495 and Asn-549 by herpes simplex virus 1 protein UL37. These modifications eliminate RIGI detection of viral RNA and restriction of viral replication. Post-translationally, degraded via selective autophagy following interaction with IRGM. IRGM promotes RIGI recruitment to autophagosome membranes, promoting its SQSTM1/p62-dependent autophagic degradation. In terms of processing, (Microbial infection) Cleaved by the protease 3C of coxsackievirus B3, poliovirus and enterovirus 71 allowing the virus to disrupt the host type I interferon production. (Microbial infection) Phosphorylated at Ser-8 by herpes simplex virus 1 protein US3 leading to inhibition of critical RIGI activation steps. In terms of tissue distribution, present in vascular smooth cells (at protein level).

It localises to the cytoplasm. It is found in the cell projection. Its subcellular location is the ruffle membrane. The protein resides in the cytoskeleton. The protein localises to the cell junction. It localises to the tight junction. The catalysed reaction is ATP + H2O = ADP + phosphate + H(+). Functionally, innate immune receptor that senses cytoplasmic viral nucleic acids and activates a downstream signaling cascade leading to the production of type I interferons and pro-inflammatory cytokines. Forms a ribonucleoprotein complex with viral RNAs on which it homooligomerizes to form filaments. The homooligomerization allows the recruitment of RNF135 an E3 ubiquitin-protein ligase that activates and amplifies the RIG-I-mediated antiviral signaling in an RNA length-dependent manner through ubiquitination-dependent and -independent mechanisms. Upon activation, associates with mitochondria antiviral signaling protein (MAVS/IPS1) that activates the IKK-related kinases TBK1 and IKBKE which in turn phosphorylate the interferon regulatory factors IRF3 and IRF7, activating transcription of antiviral immunological genes including the IFN-alpha and IFN-beta interferons. Ligands include 5'-triphosphorylated ssRNAs and dsRNAs but also short dsRNAs (&lt;1 kb in length). In addition to the 5'-triphosphate moiety, blunt-end base pairing at the 5'-end of the RNA is very essential. Overhangs at the non-triphosphorylated end of the dsRNA RNA have no major impact on its activity. A 3'overhang at the 5'triphosphate end decreases and any 5'overhang at the 5' triphosphate end abolishes its activity. Detects both positive and negative strand RNA viruses including members of the families Paramyxoviridae: Human respiratory syncytial virus and measles virus (MeV), Rhabdoviridae: vesicular stomatitis virus (VSV), Orthomyxoviridae: influenza A and B virus, Flaviviridae: Japanese encephalitis virus (JEV), hepatitis C virus (HCV), dengue virus (DENV) and west Nile virus (WNV). It also detects rotaviruses and reoviruses. Detects and binds to SARS-CoV-2 RNAs which is inhibited by m6A RNA modifications. Also involved in antiviral signaling in response to viruses containing a dsDNA genome such as Epstein-Barr virus (EBV). Detects dsRNA produced from non-self dsDNA by RNA polymerase III, such as Epstein-Barr virus-encoded RNAs (EBERs). May play important roles in granulocyte production and differentiation, bacterial phagocytosis and in the regulation of cell migration. The protein is Antiviral innate immune response receptor RIG-I of Homo sapiens (Human).